The sequence spans 917 residues: Protein translocase subunit SecA (917 aa).

ATP-binding positions include Q87, 105–109 (GEGKT), and D516. Positions 901, 903, 912, and 913 each coordinate Zn(2+).

Belongs to the SecA family. Monomer and homodimer. Part of the essential Sec protein translocation apparatus which comprises SecA, SecYEG and auxiliary proteins SecDF-YajC and YidC. The cofactor is Zn(2+).

Its subcellular location is the cell inner membrane. It localises to the cytoplasm. It catalyses the reaction ATP + H2O + cellular proteinSide 1 = ADP + phosphate + cellular proteinSide 2.. Part of the Sec protein translocase complex. Interacts with the SecYEG preprotein conducting channel. Has a central role in coupling the hydrolysis of ATP to the transfer of proteins into and across the cell membrane, serving both as a receptor for the preprotein-SecB complex and as an ATP-driven molecular motor driving the stepwise translocation of polypeptide chains across the membrane. This chain is Protein translocase subunit SecA, found in Acidovorax sp. (strain JS42).